The primary structure comprises 396 residues: Ribosomal RNA large subunit methyltransferase I (396 aa).

One can recognise a PUA domain in the interval 2–79 (AIRIKLKPGR…REEEIDRAFF (78 aa)).

The protein belongs to the methyltransferase superfamily. RlmI family.

It localises to the cytoplasm. It catalyses the reaction cytidine(1962) in 23S rRNA + S-adenosyl-L-methionine = 5-methylcytidine(1962) in 23S rRNA + S-adenosyl-L-homocysteine + H(+). Its function is as follows. Specifically methylates the cytosine at position 1962 (m5C1962) of 23S rRNA. The chain is Ribosomal RNA large subunit methyltransferase I from Shewanella putrefaciens (strain CN-32 / ATCC BAA-453).